A 1013-amino-acid chain; its full sequence is MQEQIEGAVDEELLKQSVLNNDEDDRRLTKLRIERFRTTHTLYIFLYSALAALQFIAIAFFTRGFLLSRKVLDDVANRDESTAPAKFDRLVLLVVDALRFDFVIPVDVAAEGYNSHYHNHLRALYERWDESILLKFLADPPTTTLQRLKGLTTGSLPTFIDAGSNFNGDVIDEDNIIKQMCLNNKTIYFAGDDTWDALFHPYLSNVSMPYESLNVWDLDTVDNGVISFFEDHLLNNPTEKKEWDVLVGHMLGIDHVGHKYGPSHFSMAEKQSQVDGFIRQIIDAVDEDTLLVVMGDHGMDHTGNHGGDSPAELESTLWLYTKRPGTWRRQAPAAYNTTELGRYYRAVNQIDLVPSLSLLLGLPIPFNNLGWPIEELAHDDDEWRLFTRQTLMQLETYRNTSNSITDSSKLKILEELKINANSNSSDAGNYQAILLEMYKDLWARFDYYSIGTGIILLIISLAMLITITRLIPSIVVGQMLSELVPTIIVMPLVSNVCFLGVFYVLRQPAFLQNWLWASLLATAVGIIIGFYVPIFDRYNLTWLVLRFGEELSDYWSRVAAFLITLHALIFTSNSFTIWEDKIVSFSLTTLGMLTLYEFVFLPKRHSTSAILAAALGEKEGTVSGISSGQANSDSLPLGRFARIVGGYHSIVLIVCTRLASLITICREEQGAYCTPTFTLTNNYSFSVMLGCLFLVFATPACIKGYYNVSSSYQAAAPIWIGMLMKSILFVNFIYWELKTFENTSDTHGLNLTIFNLTISRIVVGVSLVAANIGWMMGPLCIKLNVHNNDRRSQQATILGYANAYGAQYFLLVINFFMCILLFNKPLAQLSLFLMCNQLLSILEIFDLLKLKENLIGPVALGLLSYQQFFSTGHQATIPAVQWDMGFILTERITFPFTHLGIVLNTFGPHILCGISVALLTLWKQPPGILRANTLLARVVSNCGMLLIYQTVLCLSTFIWVTNFRRHLMVWKIFCPRFMFAALSLIVTQLVLTFITIAFASGRLIKQIDRMFWK.

The chain crosses the membrane as a helical span at residues 41 to 61 (TLYIFLYSALAALQFIAIAFF). N-linked (GlcNAc...) asparagine glycosylation is found at asparagine 184, asparagine 205, asparagine 336, asparagine 399, and asparagine 423. 3 consecutive transmembrane segments (helical) span residues 447 to 467 (YYSI…LITI), 484 to 504 (VPTI…VFYV), and 515 to 535 (LWAS…VPIF). An N-linked (GlcNAc...) asparagine glycan is attached at asparagine 539. 4 helical membrane-spanning segments follow: residues 558-578 (VAAF…FTIW), 582-602 (IVSF…VFLP), 643-663 (IVGG…SLIT), and 682-702 (NYSF…PACI). The N-linked (GlcNAc...) asparagine glycan is linked to asparagine 707. The chain crosses the membrane as a helical span at residues 715–735 (AAPIWIGMLMKSILFVNFIYW). Asparagine 742, asparagine 750, and asparagine 755 each carry an N-linked (GlcNAc...) asparagine glycan. A run of 7 helical transmembrane segments spans residues 761-781 (IVVG…PLCI), 802-822 (NAYG…ILLF), 825-845 (PLAQ…LEIF), 868-888 (FFST…GFIL), 899-919 (LGIV…VALL), 943-963 (GMLL…VTNF), and 977-997 (FMFA…ITIA).

This sequence belongs to the PIGG/PIGN/PIGO family. PIGO subfamily.

Its subcellular location is the endoplasmic reticulum membrane. It participates in glycolipid biosynthesis; glycosylphosphatidylinositol-anchor biosynthesis. In terms of biological role, involved in glycosylphosphatidylinositol-anchor biosynthesis. Transfers ethanolamine phosphate to the GPI third mannose which links the GPI-anchor to the C-terminus of the proteins by an amide bond. Involved in cell wall biosynthesis. This Eremothecium gossypii (strain ATCC 10895 / CBS 109.51 / FGSC 9923 / NRRL Y-1056) (Yeast) protein is GPI ethanolamine phosphate transferase 3 (GPI13).